The primary structure comprises 320 residues: 4-diphosphocytidyl-2-C-methyl-D-erythritol kinase (320 aa).

Lysine 26 is an active-site residue. Position 111 to 121 (111 to 121) interacts with ATP; it reads PVAGGMAGGSA. The active site involves aspartate 153.

It belongs to the GHMP kinase family. IspE subfamily.

It catalyses the reaction 4-CDP-2-C-methyl-D-erythritol + ATP = 4-CDP-2-C-methyl-D-erythritol 2-phosphate + ADP + H(+). It functions in the pathway isoprenoid biosynthesis; isopentenyl diphosphate biosynthesis via DXP pathway; isopentenyl diphosphate from 1-deoxy-D-xylulose 5-phosphate: step 3/6. Its function is as follows. Catalyzes the phosphorylation of the position 2 hydroxy group of 4-diphosphocytidyl-2C-methyl-D-erythritol. This is 4-diphosphocytidyl-2-C-methyl-D-erythritol kinase from Mycobacterium marinum (strain ATCC BAA-535 / M).